A 331-amino-acid polypeptide reads, in one-letter code: MTIIVTGAAGFIGSNLVKGLNERGETNVIAVDNLTRADKFHNLVDCEISDYLDKQDFLARFARGEFGKVRAVFHEGACSDTMETDGRYMMENNYRYTLSLMESCLEQGTQFLYASSAATYGASQVFREDREFERPLNVYGYSKFLFDQIVRRRLPSALSQIVGFRYFNVYGPRETHKGRMASVAFHNFNQFRADGTVKLFGEYGGYGPGMQSRDFISVEDVVKVNLFFFDHPEKSGIFNLGTGRAQPFNDIAATVVNTLREAEGKPPLSLDDLVQEGLVEYVKFPDALRGKYQCFTQSDVSKLRGAGYSERFLSVEEGVARYCRWLLERNG.

NADP(+) contacts are provided by residues 11–12 (FI), 32–33 (DN), lysine 39, lysine 54, 75–79 (EGACS), and asparagine 92. The active-site Proton acceptor is tyrosine 139. Position 143 (lysine 143) interacts with NADP(+). Asparagine 168 contributes to the substrate binding site. NADP(+) contacts are provided by valine 169 and lysine 177. Residue lysine 177 is the Proton acceptor of the active site. Residues arginine 179, histidine 186, 200–203 (FGEY), arginine 213, and tyrosine 292 each bind substrate.

Belongs to the NAD(P)-dependent epimerase/dehydratase family. HldD subfamily. Homopentamer. Requires NADP(+) as cofactor.

It catalyses the reaction ADP-D-glycero-beta-D-manno-heptose = ADP-L-glycero-beta-D-manno-heptose. It functions in the pathway nucleotide-sugar biosynthesis; ADP-L-glycero-beta-D-manno-heptose biosynthesis; ADP-L-glycero-beta-D-manno-heptose from D-glycero-beta-D-manno-heptose 7-phosphate: step 4/4. Functionally, catalyzes the interconversion between ADP-D-glycero-beta-D-manno-heptose and ADP-L-glycero-beta-D-manno-heptose via an epimerization at carbon 6 of the heptose. This is ADP-L-glycero-D-manno-heptose-6-epimerase from Cupriavidus taiwanensis (strain DSM 17343 / BCRC 17206 / CCUG 44338 / CIP 107171 / LMG 19424 / R1) (Ralstonia taiwanensis (strain LMG 19424)).